The sequence spans 589 residues: Aspartate--tRNA ligase (589 aa).

Glu-174 serves as a coordination point for L-aspartate. The segment at 198–201 (QLFK) is aspartate. Residue Arg-220 participates in L-aspartate binding. ATP-binding positions include 220–222 (RDE) and Gln-229. L-aspartate is bound at residue His-448. Glu-484 is an ATP binding site. Residue Arg-491 coordinates L-aspartate. 536-539 (GLDR) contacts ATP.

The protein belongs to the class-II aminoacyl-tRNA synthetase family. Type 1 subfamily. Homodimer.

It localises to the cytoplasm. It catalyses the reaction tRNA(Asp) + L-aspartate + ATP = L-aspartyl-tRNA(Asp) + AMP + diphosphate. Functionally, catalyzes the attachment of L-aspartate to tRNA(Asp) in a two-step reaction: L-aspartate is first activated by ATP to form Asp-AMP and then transferred to the acceptor end of tRNA(Asp). This chain is Aspartate--tRNA ligase, found in Leuconostoc citreum (strain KM20).